Reading from the N-terminus, the 454-residue chain is uncharacterized protein (454 aa).

Residues 1–25 (MHGPTSKAISRNVRSVKRPRRAPRP) are disordered. Positions 14–23 (RSVKRPRRAP) are enriched in basic residues.

It is found in the cytoplasm. The protein localises to the nucleus. This is an uncharacterized protein from Saccharomyces cerevisiae (strain ATCC 204508 / S288c) (Baker's yeast).